A 948-amino-acid polypeptide reads, in one-letter code: Probable disease resistance protein At5g47260 (948 aa).

Residues 20–57 are a coiled coil; sequence RKYLYNLERNLEALHKVMQDLNAMRNDLLKRLSKEEEI. An NB-ARC domain is found at 134-432; that stretch reads HRALPPLVIK…CEGILAKEDR (299 aa). 176–183 is a binding site for ATP; sequence GRGGVGKT. LRR repeat units lie at residues 498-519, 520-542, 545-567, 569-591, 592-614, 615-636, 640-661, 666-686, and 690-711; these read MIRRMSVTSTQIQNISDSPQCS, ELTTLVFRRNRHLKWISGAFFQW, GLVVLDLSFNRELAELPEEVSSL, LLRFLNLSWTCIKGLPLGLKELK, SLIHLDLDYTSNLQEVDVIASLL, NLQVLRLFHSVSMDLKLMEDIQ, SLKELSLTVRGSSVLQRLLSIQ, SIRRLHLTETTIVDGGILSLN, and SLCELDILGCNILEITIDWRCT.

This sequence belongs to the disease resistance NB-LRR family.

In terms of biological role, potential disease resistance protein. This Arabidopsis thaliana (Mouse-ear cress) protein is Probable disease resistance protein At5g47260.